We begin with the raw amino-acid sequence, 131 residues long: Peptide methionine sulfoxide reductase MsrB (131 aa).

Positions 8–130 constitute a MsrB domain; that stretch reads LEEWRAMLDP…NSVCLDLKPR (123 aa). Zn(2+)-binding residues include Cys47, Cys50, Cys96, and Cys99. Cys119 acts as the Nucleophile in catalysis.

It belongs to the MsrB Met sulfoxide reductase family. Requires Zn(2+) as cofactor.

The enzyme catalyses L-methionyl-[protein] + [thioredoxin]-disulfide + H2O = L-methionyl-(R)-S-oxide-[protein] + [thioredoxin]-dithiol. This chain is Peptide methionine sulfoxide reductase MsrB, found in Pseudomonas entomophila (strain L48).